We begin with the raw amino-acid sequence, 757 residues long: 5-methyltetrahydropteroyltriglutamate--homocysteine methyltransferase (757 aa).

5-methyltetrahydropteroyltri-L-glutamate-binding positions include 16–19 (RELK) and Lys-112. Residues 433-435 (IGS) and Glu-486 each bind L-homocysteine. Residues 433 to 435 (IGS) and Glu-486 contribute to the L-methionine site. Residues 517–518 (RC) and Trp-563 each bind 5-methyltetrahydropteroyltri-L-glutamate. Asp-601 provides a ligand contact to L-homocysteine. Position 601 (Asp-601) interacts with L-methionine. Glu-607 lines the 5-methyltetrahydropteroyltri-L-glutamate pocket. Zn(2+) is bound by residues His-643, Cys-645, and Glu-667. His-696 serves as the catalytic Proton donor. Cys-728 provides a ligand contact to Zn(2+).

It belongs to the vitamin-B12 independent methionine synthase family. Zn(2+) serves as cofactor.

The enzyme catalyses 5-methyltetrahydropteroyltri-L-glutamate + L-homocysteine = tetrahydropteroyltri-L-glutamate + L-methionine. It functions in the pathway amino-acid biosynthesis; L-methionine biosynthesis via de novo pathway; L-methionine from L-homocysteine (MetE route): step 1/1. In terms of biological role, catalyzes the transfer of a methyl group from 5-methyltetrahydrofolate to homocysteine resulting in methionine formation. This chain is 5-methyltetrahydropteroyltriglutamate--homocysteine methyltransferase, found in Pasteurella multocida (strain Pm70).